Here is an 803-residue protein sequence, read N- to C-terminus: Phenylalanine--tRNA ligase beta subunit (803 aa).

The tRNA-binding domain maps to 40–150; that stretch reads SNKFYGIVIA…IDAPIGCNFY (111 aa). One can recognise a B5 domain in the interval 405–480; that stretch reads PKIKIIKLHR…RIYGYNHIPK (76 aa). Mg(2+) contacts are provided by Asp458 and Glu468. Residues 710 to 803 form the FDX-ACB domain; that stretch reads SKFPKNYRDI…LKKHFNAIFR (94 aa).

It belongs to the phenylalanyl-tRNA synthetase beta subunit family. Type 1 subfamily. Tetramer of two alpha and two beta subunits. Mg(2+) is required as a cofactor.

The protein resides in the cytoplasm. The catalysed reaction is tRNA(Phe) + L-phenylalanine + ATP = L-phenylalanyl-tRNA(Phe) + AMP + diphosphate + H(+). This chain is Phenylalanine--tRNA ligase beta subunit, found in Blochmanniella floridana.